The primary structure comprises 41 residues: Divisome-associated membrane protein Blr (41 aa).

Topologically, residues 1–3 are cytoplasmic; sequence MNR. The helical transmembrane segment at 4–24 threads the bilayer; it reads LIELTGWIVLVVSVILLGVAS. Topologically, residues 25-41 are periplasmic; that stretch reads HIDNYQPPEQSASVQHK.

In terms of assembly, interacts with FtsL and several other divisomal proteins, including FtsI, FtsK, FtsN, FtsQ, FtsW and YmgF. In terms of processing, the N-terminus is blocked.

It localises to the cell inner membrane. In terms of biological role, component of the cell division machinery, which is probably involved in the stabilization of the divisome under certain stress conditions. This is Divisome-associated membrane protein Blr (blr) from Escherichia coli (strain K12).